The primary structure comprises 326 residues: 2-dehydropantoate 2-reductase (326 aa).

Residues 7-12 (GAGAIG) and Asn103 each bind NADP(+). Asn103 contacts substrate. Lys205 (proton donor) is an active-site residue. Asn209, Asn213, and Ser274 together coordinate substrate. Glu286 is a binding site for NADP(+).

The protein belongs to the ketopantoate reductase family.

The protein localises to the cytoplasm. It catalyses the reaction (R)-pantoate + NADP(+) = 2-dehydropantoate + NADPH + H(+). Its pathway is cofactor biosynthesis; (R)-pantothenate biosynthesis; (R)-pantoate from 3-methyl-2-oxobutanoate: step 2/2. Its function is as follows. Catalyzes the NADPH-dependent reduction of ketopantoate into pantoic acid. The chain is 2-dehydropantoate 2-reductase from Mesorhizobium japonicum (strain LMG 29417 / CECT 9101 / MAFF 303099) (Mesorhizobium loti (strain MAFF 303099)).